Here is a 247-residue protein sequence, read N- to C-terminus: EGF-like domain-containing protein C02B10.3 (247 aa).

Residues Met1–Ala17 form the signal peptide. Topologically, residues Glu18–His220 are extracellular. EGF-like domains follow at residues Phe114–Glu150 and Ser180–Asp213. Intrachain disulfides connect Cys123/Cys138, Cys140/Cys149, Cys190/Cys201, and Cys203/Cys212. N-linked (GlcNAc...) asparagine glycosylation is present at Asn126. A helical membrane pass occupies residues Val221–Leu240. The Cytoplasmic segment spans residues Cys241–Tyr247.

The protein localises to the membrane. The chain is EGF-like domain-containing protein C02B10.3 from Caenorhabditis elegans.